The chain runs to 203 residues: Holliday junction branch migration complex subunit RuvA (203 aa).

Residues 1 to 64 (MIGRLRGIII…EDAQLLYGFN (64 aa)) are domain I. Residues 65–142 (NKQERTLFKE…KGLHGDLFTP (78 aa)) form a domain II region. The tract at residues 143-154 (AADLVLTSPASP) is flexible linker. Residues 155–203 (ATNDAEQEAVAALVALGYKPQEASRMVSKIARPDASSETLIREALRAAL) form a domain III region.

It belongs to the RuvA family. As to quaternary structure, homotetramer. Forms an RuvA(8)-RuvB(12)-Holliday junction (HJ) complex. HJ DNA is sandwiched between 2 RuvA tetramers; dsDNA enters through RuvA and exits via RuvB. An RuvB hexamer assembles on each DNA strand where it exits the tetramer. Each RuvB hexamer is contacted by two RuvA subunits (via domain III) on 2 adjacent RuvB subunits; this complex drives branch migration. In the full resolvosome a probable DNA-RuvA(4)-RuvB(12)-RuvC(2) complex forms which resolves the HJ.

Its subcellular location is the cytoplasm. The RuvA-RuvB-RuvC complex processes Holliday junction (HJ) DNA during genetic recombination and DNA repair, while the RuvA-RuvB complex plays an important role in the rescue of blocked DNA replication forks via replication fork reversal (RFR). RuvA specifically binds to HJ cruciform DNA, conferring on it an open structure. The RuvB hexamer acts as an ATP-dependent pump, pulling dsDNA into and through the RuvAB complex. HJ branch migration allows RuvC to scan DNA until it finds its consensus sequence, where it cleaves and resolves the cruciform DNA. The protein is Holliday junction branch migration complex subunit RuvA of Escherichia coli O9:H4 (strain HS).